The chain runs to 629 residues: Mitochondrial Rho GTPase 1 (629 aa).

The Cytoplasmic portion of the chain corresponds to 1–600; sequence MSTAVRICVC…PRSEEPPADR (600 aa). The region spanning 2–170 is the Miro 1 domain; it reads STAVRICVCG…FYLCQKAVTH (169 aa). GTP contacts are provided by residues 11-18, 59-63, and 115-118; these read GDEGTGKS, DTSAR, and NKSD. EF-hand domains lie at 186–221 and 306–341; these read ACVDALRRIFFLSDKDQDGYLNDQEMQDFQQKSFDK and AGYRFFMDLFLTFDKDNDGGLNDRELAALFAPTPGL. Ca(2+)-binding residues include aspartate 199, aspartate 201, aspartate 203, tyrosine 205, glutamate 210, aspartate 319, aspartate 321, aspartate 323, and glutamate 330. In terms of domain architecture, Miro 2 spans 421-585; the sequence is RNVVLCYILG…FVALAEAATN (165 aa). Residues 430–437, 466–470, and 535–538 each bind GTP; these read GSSGAGKS, ELQGG, and LKAD. A helical; Anchor for type IV membrane protein membrane pass occupies residues 601 to 621; it reads ASLYMALGATACAALAAFMIW. Topologically, residues 622–629 are mitochondrial intermembrane; sequence RRSTSNAA.

This sequence belongs to the mitochondrial Rho GTPase family.

The protein resides in the mitochondrion outer membrane. Mitochondrial GTPase involved in mitochondrial trafficking. Probably involved in control of anterograde transport of mitochondria and their subcellular distribution. The protein is Mitochondrial Rho GTPase 1 (gem-1) of Neurospora crassa (strain ATCC 24698 / 74-OR23-1A / CBS 708.71 / DSM 1257 / FGSC 987).